The primary structure comprises 396 residues: MAEVNVRNFNINFGPQHPAAHGVLRMVLELDGEVVERVDPHIGLLHRGTEKLMETKTYLQAGPYLDRLDYVAPMNQEHAFVLAIEKLLGVEVPKRGQLIRVLFSEIGRILNHLLNVTTQAMDVGALTPPLWGFEQRERLMIFYERACGARLHANYFRPGGVHQDLPESLVEDIGNFIDPFLIALGKLDALITPNRIFKQRNVDIGVVSIDEAWARGFSGVMIRGAGVPWDLRKSQPYECYDEMEFDIPVGKNSDCYDRYLIRMEEMRQSAKIMRQCVDRLLSTEKNEPVSSLDRKIVPPKRCEMKSSMEALIHHFKLYTEGFRTPPGEVYVAVEAPKGEFGVYLVSDGTNKPYRVKLRAPGFAHLQAMDFLTRGHMLADATAILGSIDIVFGEVDR.

The protein belongs to the complex I 49 kDa subunit family. As to quaternary structure, NDH-1 is composed of 14 different subunits. Subunits NuoB, C, D, E, F, and G constitute the peripheral sector of the complex.

It is found in the cell inner membrane. It catalyses the reaction a quinone + NADH + 5 H(+)(in) = a quinol + NAD(+) + 4 H(+)(out). Functionally, NDH-1 shuttles electrons from NADH, via FMN and iron-sulfur (Fe-S) centers, to quinones in the respiratory chain. The immediate electron acceptor for the enzyme in this species is believed to be ubiquinone. Couples the redox reaction to proton translocation (for every two electrons transferred, four hydrogen ions are translocated across the cytoplasmic membrane), and thus conserves the redox energy in a proton gradient. The polypeptide is NADH-quinone oxidoreductase subunit D (Bartonella henselae (strain ATCC 49882 / DSM 28221 / CCUG 30454 / Houston 1) (Rochalimaea henselae)).